Consider the following 863-residue polypeptide: Bifunctional uridylyltransferase/uridylyl-removing enzyme (863 aa).

A uridylyltransferase region spans residues 1–328; the sequence is MLFSPTLSSP…PSNQDTVIDQ (328 aa). The tract at residues 329–687 is uridylyl-removing; sequence LDDDFQLINQ…ISNRFSLGGT (359 aa). One can recognise an HD domain in the interval 446-568; the sequence is VDEHTLRVML…VQNQVRLDYL (123 aa). ACT domains lie at 688–772 and 794–863; these read EVFI…PNRQ and QMEL…RNIG.

This sequence belongs to the GlnD family. Requires Mg(2+) as cofactor.

It catalyses the reaction [protein-PII]-L-tyrosine + UTP = [protein-PII]-uridylyl-L-tyrosine + diphosphate. It carries out the reaction [protein-PII]-uridylyl-L-tyrosine + H2O = [protein-PII]-L-tyrosine + UMP + H(+). Uridylyltransferase (UTase) activity is inhibited by glutamine, while glutamine activates uridylyl-removing (UR) activity. Modifies, by uridylylation and deuridylylation, the PII regulatory proteins (GlnB and homologs), in response to the nitrogen status of the cell that GlnD senses through the glutamine level. Under low glutamine levels, catalyzes the conversion of the PII proteins and UTP to PII-UMP and PPi, while under higher glutamine levels, GlnD hydrolyzes PII-UMP to PII and UMP (deuridylylation). Thus, controls uridylylation state and activity of the PII proteins, and plays an important role in the regulation of nitrogen assimilation and metabolism. This Haemophilus influenzae (strain 86-028NP) protein is Bifunctional uridylyltransferase/uridylyl-removing enzyme.